The following is a 398-amino-acid chain: Cation channel sperm-associated protein 3 (398 aa).

At 1 to 48 (MSQHRHQRHSRVISSSPVDTTSVGFCPTFKKFKRNDDECRAFVKRVIM) the chain is on the cytoplasmic side. The chain crosses the membrane as a helical span at residues 49–71 (SRFFKIIMISTVTSNAFFMALWT). Residues 72–80 (SYDIRYRLF) lie on the Extracellular side of the membrane. A helical transmembrane segment spans residues 81–107 (RLLEFSEIFFVSICTSELSMKVYVDPI). Position 108 (N108) is a topological domain, cytoplasmic. The helical transmembrane segment at 109-131 (YWKNGYNLLDVIIIIVMFLPYAL) threads the bilayer. Topologically, residues 132-143 (RQLMGKQFTYLY) are extracellular. A helical transmembrane segment spans residues 144 to 160 (IADGMQSLRILKLIGYS). Residues 161 to 168 (QGIRTLIT) are Cytoplasmic-facing. The helical transmembrane segment at 169–195 (AVGQTVYTVASVLLLLFLLMYIFAILG) threads the bilayer. At 196 to 216 (FCLFGSPDNGDHDNWGNLAAA) the chain is on the extracellular side. Residues 217 to 236 (FFTLFSLATVDGWTDLQKQL) constitute an intramembrane region (helical; Pore-forming). Residues 237–242 (DNREFA) lie on the Extracellular side of the membrane. A helical membrane pass occupies residues 243–268 (LSRAFTIIFILLASFIFLNMFVGVMI). Residues 269–398 (MHTEDSIRKF…PQSLEKVDEK (130 aa)) are Cytoplasmic-facing.

Belongs to the cation channel sperm-associated (TC 1.A.1.19) family. As to quaternary structure, component of the CatSper complex or CatSpermasome composed of the core pore-forming members CATSPER1, CATSPER2, CATSPER3 and CATSPER4 as well as auxiliary members CATSPERB, CATSPERG, CATSPERD, CATSPERE, CATSPERZ, C2CD6/CATSPERT, TMEM249, TMEM262 and EFCAB9. HSPA1 may be an additional auxiliary complex member. The core complex members CATSPER1, CATSPER2, CATSPER3 and CATSPER4 form a heterotetrameric channel. The auxiliary CATSPERB, CATSPERG, CATSPERD and CATSPERE subunits form a pavilion-like structure over the pore which stabilizes the complex through interactions with CATSPER4, CATSPER3, CATSPER1 and CATSPER2 respectively. TMEM262/CATSPERH interacts with CATSPERB, further stabilizing the complex. C2CD6/CATSPERT interacts at least with CATSPERD and is required for targeting the CatSper complex in the flagellar membrane. Testis-specific.

It is found in the cell projection. The protein resides in the cilium. It localises to the flagellum membrane. The catalysed reaction is Ca(2+)(in) = Ca(2+)(out). Its activity is regulated as follows. The CatSper calcium channel is indirectly activated by extracellular progesterone and prostaglandins following the sequence: progesterone &gt; PGF1-alpha = PGE1 &gt; PGA1 &gt; PGE2 &gt;&gt; PGD2. The CatSper calcium channel is directly inhibited by endocannabinoid 2-arachidonoylglycerol (2AG). Indirect activation by progesterone takes place via the following mechanism: progesterone binds and activates the acylglycerol lipase ABHD2, which in turn mediates hydrolysis of 2AG inhibitor, relieving inhibition of the CatSper channel. The primary effect of progesterone activation is to shift voltage dependence towards more physiological, negative membrane potentials; it is not mediated by metabotropic receptors and second messengers. Sperm capacitation enhances the effect of progesterone by providing additional negative shift. Also activated by the elevation of intracellular pH. Pore-forming subunit of the CatSper complex, a sperm-specific voltage-gated calcium channel that plays a central role in calcium-dependent physiological responses essential for successful fertilization, such as sperm hyperactivation, acrosome reaction and chemotaxis towards the oocyte. The chain is Cation channel sperm-associated protein 3 (CATSPER3) from Homo sapiens (Human).